Here is a 263-residue protein sequence, read N- to C-terminus: MEGGFTGGDEYQKHFLPRDYLATYYSFDGSPSPEAEMLKFNLECLHKTFGPGGLQGDTLIDIGSGPTIYQVLAACESFQDITLSDFTDRNREELEKWLKKEPGAYDWTPVVKFACELEGNSGQWEEKEEKLRATVKRVLKCDVHLGNPLAPAVLPPADCVLTLLAMECACCSLDAYCAALCNLASLLKPGGHLVTTVTLRLSSYMVGKREFSCVALEKEEVEQAVLDAGFDIEQLLQSPQSYSVTNAANNGVCFIVARKKPGP.

Lys-13 carries the N6-succinyllysine modification. S-adenosyl-L-methionine-binding positions include Tyr-20, Tyr-25, 63-64 (GS), Tyr-69, Asp-85, and Asn-90. Lys-96 carries the N6-succinyllysine modification. S-adenosyl-L-methionine contacts are provided by residues 142 to 143 (DV) and Leu-163.

It belongs to the class I-like SAM-binding methyltransferase superfamily. NNMT/PNMT/TEMT family. Monomer.

The protein resides in the cytoplasm. It carries out the reaction a tertiary amine + S-adenosyl-L-methionine = a methylated tertiary amine + S-adenosyl-L-homocysteine + H(+). The catalysed reaction is a secondary amine + S-adenosyl-L-methionine = a methylated secondary amine + S-adenosyl-L-homocysteine + H(+). The enzyme catalyses a primary amine + S-adenosyl-L-methionine = a methylated primary amine + S-adenosyl-L-homocysteine + H(+). It catalyses the reaction dimethyl sulfide + S-adenosyl-L-methionine = trimethylsulfonium + S-adenosyl-L-homocysteine. Catalyzes the N-methylation of tryptamine and structurally related compounds. Functions as a thioether S-methyltransferase and is active with a variety of thioethers and the corresponding selenium and tellurium compounds, including 3-methylthiopropionaldehyde, dimethyl selenide, dimethyl telluride, 2-methylthioethylamine, 2-methylthioethanol, methyl-n-propyl sulfide and diethyl sulfide. Plays an important role in the detoxification of selenium compounds. This chain is Indolethylamine N-methyltransferase (INMT), found in Pongo abelii (Sumatran orangutan).